A 573-amino-acid chain; its full sequence is Potassium-transporting ATPase potassium-binding subunit (573 aa).

Helical transmembrane passes span 6–26 (ILFALFIVTIALITKPLGSYI), 66–86 (FFSLVSFSVMAFIFVLVILLL), 135–155 (ALAVQNFVSAAVGLCVAIALI), 177–197 (VFWILLPISIVIAIVYIFQGV), 257–277 (IQMVSIFAIAAALTYTFGKWV), 283–303 (GWLIFGVMLVLFIISLVVMTI), 382–402 (IFGGVGAGFYGFFMFLMLAVF), 428–448 (MFALLISPCCVLVFTGLAAVI), 493–513 (ITIALSMLIGRFGVIFAVIML), and 537–557 (FIFAILVFFTILLIGGLTIFP).

This sequence belongs to the KdpA family. As to quaternary structure, the system is composed of three essential subunits: KdpA, KdpB and KdpC.

It localises to the cell inner membrane. Its function is as follows. Part of the high-affinity ATP-driven potassium transport (or Kdp) system, which catalyzes the hydrolysis of ATP coupled with the electrogenic transport of potassium into the cytoplasm. This subunit binds the periplasmic potassium ions and delivers the ions to the membrane domain of KdpB through an intramembrane tunnel. This chain is Potassium-transporting ATPase potassium-binding subunit, found in Francisella tularensis subsp. mediasiatica (strain FSC147).